The primary structure comprises 111 residues: Mitochondrial import inner membrane translocase subunit Tim10B (111 aa).

The Twin CX3C motif signature appears at 24-48; it reads CFNACARDYTTSTLTKDEGSCVSQC. Cystine bridges form between cysteine 24–cysteine 48 and cysteine 28–cysteine 44. A disordered region spans residues 73–111; sequence KQGEQSPTEAIKSAKPEPAVPAPEATPVETTPVIEENKQ. Low complexity predominate over residues 94–105; the sequence is APEATPVETTPV.

The protein belongs to the small Tim family. In terms of assembly, component of the TIM22 complex, whose core is composed of tim-22, associated with peripheral protein tin-9.2/tim-10b and the 70 kDa heterohexamer. In most cases, the 70 kDa complex is composed of TIMM9 and TIMM10.

Its subcellular location is the mitochondrion inner membrane. Functionally, component of the TIM22 complex, a complex that mediates the import and insertion of multi-pass transmembrane proteins into the mitochondrial inner membrane. The TIM22 complex forms a twin-pore translocase that uses the membrane potential as the external driving force. In the TIM22 complex, it may act as a docking point for the soluble 70 kDa complex that guides the target proteins in transit through the aqueous mitochondrial intermembrane space. In Caenorhabditis elegans, this protein is Mitochondrial import inner membrane translocase subunit Tim10B (tin-9.2).